We begin with the raw amino-acid sequence, 159 residues long: Trafficking protein particle complex subunit 6A (159 aa).

S33 is modified (phosphoserine).

It belongs to the TRAPP small subunits family. BET3 subfamily. In terms of assembly, part of the multisubunit transport protein particle (TRAPP) complex. Heterodimer with TRAPPC3. The heterodimer TRAPPC3-TRAPPC6A interacts with TRAPPC2L. Interacts with TRAPPC2L.

It is found in the golgi apparatus. The protein resides in the cis-Golgi network. It localises to the endoplasmic reticulum. Its function is as follows. May play a role in vesicular transport during the biogenesis of melanosomes. The chain is Trafficking protein particle complex subunit 6A from Bos taurus (Bovine).